A 360-amino-acid chain; its full sequence is Glutaminyl-peptide cyclotransferase (360 aa).

A signal peptide spans methionine 1–cysteine 23. A glycan (N-linked (GlcNAc...) asparagine) is linked at asparagine 135. Aspartate 165 is a binding site for Zn(2+). Glutamate 199 functions as the Proton acceptor in the catalytic mechanism. Glutamate 200 is a binding site for Zn(2+). Residue aspartate 251 is the Proton acceptor of the active site. Zn(2+) is bound at residue histidine 330.

Belongs to the glutaminyl-peptide cyclotransferase family.

The protein resides in the secreted. The enzyme catalyses N-terminal L-glutaminyl-[peptide] = N-terminal 5-oxo-L-prolyl-[peptide] + NH4(+). Responsible for the biosynthesis of pyroglutamyl peptides. Has a bias against acidic and tryptophan residues adjacent to the N-terminal glutaminyl residue and a lack of importance of chain length after the second residue. Also catalyzes N-terminal pyroglutamate formation. The sequence is that of Glutaminyl-peptide cyclotransferase (qpct) from Dictyostelium discoideum (Social amoeba).